The chain runs to 303 residues: Bifunctional protein FolD (303 aa).

NADP(+)-binding positions include 168 to 170, Thr-197, and Val-238; that span reads GRS.

It belongs to the tetrahydrofolate dehydrogenase/cyclohydrolase family. In terms of assembly, homodimer.

It catalyses the reaction (6R)-5,10-methylene-5,6,7,8-tetrahydrofolate + NADP(+) = (6R)-5,10-methenyltetrahydrofolate + NADPH. The enzyme catalyses (6R)-5,10-methenyltetrahydrofolate + H2O = (6R)-10-formyltetrahydrofolate + H(+). The protein operates within one-carbon metabolism; tetrahydrofolate interconversion. Its function is as follows. Catalyzes the oxidation of 5,10-methylenetetrahydrofolate to 5,10-methenyltetrahydrofolate and then the hydrolysis of 5,10-methenyltetrahydrofolate to 10-formyltetrahydrofolate. This chain is Bifunctional protein FolD, found in Desulfosudis oleivorans (strain DSM 6200 / JCM 39069 / Hxd3) (Desulfococcus oleovorans).